Reading from the N-terminus, the 1371-residue chain is Trifunctional purine biosynthetic protein adenosine-3 (1371 aa).

One can recognise an ATP-grasp domain in the interval 115–321; the sequence is KDFMIRHHIP…LYDLMMASCT (207 aa). ATP-binding positions include 193 to 196, Glu200, Arg223, and Asn232; that span reads EEKL. Mg(2+)-binding residues include Glu291 and Asn293. Positions 434 to 1171 are AIRS domain; sequence IHSLTYKESG…ERLLSIPKKR (738 aa). The GART domain stretch occupies residues 1169-1369; the sequence is KKRVGVLISG…VRLNDKCETE (201 aa). 1180-1182 serves as a coordination point for N(1)-(5-phospho-beta-D-ribosyl)glycinamide; sequence GSN. (6R)-10-formyltetrahydrofolate contacts are provided by residues Arg1235, 1260–1263, and Asn1277; that span reads MRIL. His1279 functions as the Proton donor in the catalytic mechanism. 1311–1315 provides a ligand contact to (6R)-10-formyltetrahydrofolate; the sequence is DENVD. 1341–1344 contacts N(1)-(5-phospho-beta-D-ribosyl)glycinamide; the sequence is HVAE.

It in the N-terminal section; belongs to the GARS family. This sequence in the central section; belongs to the AIR synthase family. The protein in the C-terminal section; belongs to the GART family. Homodimer. The cofactor is Mg(2+). Mn(2+) serves as cofactor.

The enzyme catalyses 5-phospho-beta-D-ribosylamine + glycine + ATP = N(1)-(5-phospho-beta-D-ribosyl)glycinamide + ADP + phosphate + H(+). It catalyses the reaction 2-formamido-N(1)-(5-O-phospho-beta-D-ribosyl)acetamidine + ATP = 5-amino-1-(5-phospho-beta-D-ribosyl)imidazole + ADP + phosphate + H(+). The catalysed reaction is N(1)-(5-phospho-beta-D-ribosyl)glycinamide + (6R)-10-formyltetrahydrofolate = N(2)-formyl-N(1)-(5-phospho-beta-D-ribosyl)glycinamide + (6S)-5,6,7,8-tetrahydrofolate + H(+). The protein operates within purine metabolism; IMP biosynthesis via de novo pathway; 5-amino-1-(5-phospho-D-ribosyl)imidazole from N(2)-formyl-N(1)-(5-phospho-D-ribosyl)glycinamide: step 2/2. Its pathway is purine metabolism; IMP biosynthesis via de novo pathway; N(1)-(5-phospho-D-ribosyl)glycinamide from 5-phospho-alpha-D-ribose 1-diphosphate: step 2/2. It functions in the pathway purine metabolism; IMP biosynthesis via de novo pathway; N(2)-formyl-N(1)-(5-phospho-D-ribosyl)glycinamide from N(1)-(5-phospho-D-ribosyl)glycinamide (10-formyl THF route): step 1/1. Functionally, trifunctional enzyme that catalyzes three distinct reactions as part of the 'de novo' inosine monophosphate biosynthetic pathway. This chain is Trifunctional purine biosynthetic protein adenosine-3 (GART), found in Chironomus tentans (Midge).